We begin with the raw amino-acid sequence, 579 residues long: MVEQTKDQLSAFHYHMLDFLLTKSEKVTFTDSFIWLTSAIQTYFSTLCVSLTPSPSDFVTKLADGEARFSASKINASCYLIEDGSGRRFHLACRQDEEIPEGLPDVVASFLNQSMKQERLYNKTIYQKKIYKMTELFHSLLDQTDVLKQLLESLTSTFSLFEFSLFISHDQDQCLGIPAKELYMEGEKSDSFALKVYLSGDILRKNESVAYIPIKGQQGTYGVLKAEGTGDSFLTDACLDEMSLLANAAGKAFENAQLYEQSKASIANLELINETSRRLNQRLTLTDTMNDLAVRMAESFQAEEVGFFHIDHFENLTLLPGSTAFFKEAKPSDFYNELKEKLYEGEKGVFIGNGQSVFGKAGYGSLMAAPMIQNDRLLGFAVLLKQELYAFTFEMYKLFQALIHHATLAVTNSMLRDRLEHLVKTDQLTELYSRAYLDEKIQYSMKIHQKGVFILVDIDNFKNVNDTYGHQTGDEILIQVASVIKSNIRKHDVGARWGGEELAIYLPNVPVAVGKRITERLVYAVRKNTKPEVTISCGISCWTTETKKSLKELVHEADEALYSAKRSGKNRLMIHDSIK.

Positions 449–577 (QKGVFILVDI…GKNRLMIHDS (129 aa)) constitute a GGDEF domain.

This is an uncharacterized protein from Bacillus subtilis (strain 168).